The primary structure comprises 20 residues: Venom peptide Ocy8 (20 aa).

In terms of tissue distribution, expressed by the venom gland.

The protein localises to the secreted. The protein is Venom peptide Ocy8 of Opisthacanthus cayaporum (South American scorpion).